Here is a 335-residue protein sequence, read N- to C-terminus: Vitamin B12 import system permease protein BtuC (335 aa).

The next 9 membrane-spanning stretches (helical) occupy residues 25 to 45, 67 to 87, 95 to 114, 118 to 140, 153 to 173, 200 to 220, 243 to 263, 286 to 306, and 308 to 328; these read LVVI…IWLW, LAVL…QALF, GLLG…VLLG, LPIW…LLLG, LLVG…AVYF, LVLA…VLNF, VLAI…ISFI, CALA…IALF, and AELP…IWLL.

It belongs to the binding-protein-dependent transport system permease family. FecCD subfamily. The complex is composed of two ATP-binding proteins (BtuD), two transmembrane proteins (BtuC) and a solute-binding protein (BtuF).

It is found in the cell inner membrane. Part of the ABC transporter complex BtuCDF involved in vitamin B12 import. Involved in the translocation of the substrate across the membrane. The chain is Vitamin B12 import system permease protein BtuC from Yersinia enterocolitica serotype O:8 / biotype 1B (strain NCTC 13174 / 8081).